A 283-amino-acid polypeptide reads, in one-letter code: Non-selective voltage-gated ion channel VDAC3 (283 aa).

At Cys-2 the chain carries N-acetylcysteine. Position 4 is a phosphothreonine (Thr-4). N6-acetyllysine is present on residues Lys-12, Lys-15, and Lys-20. Beta stranded transmembrane passes span 26 to 35 and 39 to 47; these read MVKIDLKTKS and VEFSTSGHA. At Thr-33 the chain carries Phosphothreonine. Residue Lys-53 forms a Glycyl lysine isopeptide (Lys-Gly) (interchain with G-Cter in ubiquitin) linkage. 3 consecutive transmembrane segments (beta stranded) span residues 54-64, 69-76, and 80-89; these read ASGNLETKYKV, LIFTQKWN, and TLGTEISWEN. An N6-acetyllysine modification is found at Lys-90. A beta stranded membrane pass occupies residues 95–104; the sequence is LKLTVDTIFV. Residues Lys-109 and Lys-110 each participate in a glycyl lysine isopeptide (Lys-Gly) (interchain with G-Cter in ubiquitin) cross-link. The next 10 beta stranded transmembrane spans lie at 111 to 120, 123 to 130, 137 to 145, 150 to 158, 163 to 175, 178 to 185, 189 to 198, 202 to 211, 218 to 227, and 231 to 238; these read SGKLKASYRR, FSVGSKVD, TIYGWAVLA, LAGYQMSFD, KLCQ…GYKA, FQLHTHVN, EFGGSIYQRV, IETSINLAWT, RFGIAAKYRL, and TSLSAKVN. Residue Ser-241 is modified to Phosphoserine. Residues 242-244 and 260-264 each bind NAD(+); these read LIG and SALVD. A run of 2 beta stranded transmembrane segments spans residues 242 to 251 and 254 to 263; these read LIGLGYTQSL and GVKLTLSALV. At Lys-266 the chain carries N6-acetyllysine; alternate. Residue Lys-266 forms a Glycyl lysine isopeptide (Lys-Gly) (interchain with G-Cter in ubiquitin); alternate linkage. The beta stranded transmembrane segment at 273 to 282 threads the bilayer; the sequence is HKVGLGFELE.

This sequence belongs to the eukaryotic mitochondrial porin family. As to quaternary structure, interacts with ARMC12 in a TBC1D21-dependent manner. Interacts with MISFA. Ubiquitinated by PRKN during mitophagy, leading to its degradation and enhancement of mitophagy. Deubiquitinated by USP30. In terms of tissue distribution, isoform 1 is widely expressed with strong expression in atrium and ascitic tumor, lower levels in brain and very low levels in liver and kidney. Isoform 2 is also widely expressed with highest levels in brain but no expression in kidney. Also expressed in flagella of epididymal sperm.

It localises to the mitochondrion outer membrane. It is found in the membrane. It catalyses the reaction chloride(in) = chloride(out). It carries out the reaction K(+)(in) = K(+)(out). Non-selective voltage-gated ion channel that mediates the transport of anions and cations through the mitochondrion outer membrane and plasma membrane. Forms a high-conducting channel with a stable open state and a voltage-induced closure with a mild preference for anions over cations. Involved in male fertility and sperm mitochondrial sheath formation. This is Non-selective voltage-gated ion channel VDAC3 from Rattus norvegicus (Rat).